The sequence spans 205 residues: UPF0316 protein Cthe_2213 (205 aa).

The next 3 membrane-spanning stretches (helical) occupy residues 15-37, 44-64, and 70-90; these read LPLL…IIFV, LAPV…SQIM, and FVCY…GIII.

Belongs to the UPF0316 family.

The protein localises to the cell membrane. This Acetivibrio thermocellus (strain ATCC 27405 / DSM 1237 / JCM 9322 / NBRC 103400 / NCIMB 10682 / NRRL B-4536 / VPI 7372) (Clostridium thermocellum) protein is UPF0316 protein Cthe_2213.